The chain runs to 356 residues: Proline-rich protein 19 (356 aa).

Residues 1–12 show a composition bias toward polar residues; that stretch reads MDTQGPVSQPFQ. 4 disordered regions span residues 1–53, 95–143, 216–255, and 312–331; these read MDTQ…RDPP, LVPG…ELSG, INSP…RGSL, and PSSP…SPPS. The segment covering 19 to 29 has biased composition (basic residues); it reads RVRRRKTRRER.

Interacts with CNTD1.

The protein resides in the nucleus. It is found in the chromosome. Functionally, promotes meiotic crossing over formation through its interaction with CNTD1 by participating in the crossover differentiation step of crossover-specific recombination intermediates. The protein is Proline-rich protein 19 of Homo sapiens (Human).